Here is a 111-residue protein sequence, read N- to C-terminus: Probable 4-amino-4-deoxy-L-arabinose-phosphoundecaprenol flippase subunit ArnE (111 aa).

Residues 1 to 35 (MIWLTLVFASLLSVAGQLCQKQATCFATVNKRRKH) are Cytoplasmic-facing. The chain crosses the membrane as a helical span at residues 36-56 (IVLWLGLALACLGLAMVLWLL). Residues 40–109 (LGLALACLGL…IIGGIVILGS (70 aa)) form the EamA domain. The Periplasmic portion of the chain corresponds to 57 to 60 (VLQN). Residues 61-81 (VPVGIAYPMLSLNFVWVTLAA) form a helical membrane-spanning segment. At 82–87 (VKLWHE) the chain is on the cytoplasmic side. Residues 88-108 (PVSLRHWCGVAFIIGGIVILG) traverse the membrane as a helical segment. Topologically, residues 109 to 111 (STV) are periplasmic.

It belongs to the ArnE family. As to quaternary structure, heterodimer of ArnE and ArnF.

It is found in the cell inner membrane. The protein operates within bacterial outer membrane biogenesis; lipopolysaccharide biosynthesis. In terms of biological role, translocates 4-amino-4-deoxy-L-arabinose-phosphoundecaprenol (alpha-L-Ara4N-phosphoundecaprenol) from the cytoplasmic to the periplasmic side of the inner membrane. The sequence is that of Probable 4-amino-4-deoxy-L-arabinose-phosphoundecaprenol flippase subunit ArnE from Escherichia coli O6:H1 (strain CFT073 / ATCC 700928 / UPEC).